The primary structure comprises 514 residues: Cytochrome c-552 (514 aa).

Residues 1 to 21 (MKFKLLLAGSLVAVGAMALLA) form the signal peptide. Residues H101, C129, C132, K133, C167, C170, H171, C210, C213, and H214 each contribute to the heme c site. Positions 216, 217, 279, and 281 each coordinate Ca(2+). Position 217 (Y217) interacts with substrate. Position 282 (H282) interacts with substrate. H293, C300, C303, H304, H318, C332, C335, H336, and H411 together coordinate heme c.

It belongs to the cytochrome c-552 family. Homodimer. Probably also exists as a membrane-associated heterooligomeric complex. It depends on Ca(2+) as a cofactor. Heme c serves as cofactor.

The protein localises to the periplasm. The catalysed reaction is 6 Fe(III)-[cytochrome c] + NH4(+) + 2 H2O = 6 Fe(II)-[cytochrome c] + nitrite + 8 H(+). Its pathway is nitrogen metabolism; nitrate reduction (assimilation). In terms of biological role, catalyzes the reduction of nitrite to ammonia, consuming six electrons in the process. Has very low activity toward hydroxylamine, and even lower activity toward sulfite. Sulfite reductase activity is maximal at neutral pH. The sequence is that of Cytochrome c-552 (nrfA) from Sulfurospirillum deleyianum.